We begin with the raw amino-acid sequence, 271 residues long: Mannosyl-3-phosphoglycerate phosphatase (271 aa).

Aspartate 13 acts as the Nucleophile in catalysis. Aspartate 13, aspartate 15, and aspartate 214 together coordinate Mg(2+).

The protein belongs to the HAD-like hydrolase superfamily. MPGP family. The cofactor is Mg(2+).

It localises to the cytoplasm. The catalysed reaction is 2-O-(alpha-D-mannosyl)-3-phosphoglycerate + H2O = (2R)-2-O-(alpha-D-mannosyl)-glycerate + phosphate. In Escherichia coli O127:H6 (strain E2348/69 / EPEC), this protein is Mannosyl-3-phosphoglycerate phosphatase.